We begin with the raw amino-acid sequence, 883 residues long: Valine--tRNA ligase (883 aa).

Positions 46–56 (PNVTGKLHLGH) match the 'HIGH' region motif. Positions 520–524 (KMSKS) match the 'KMSKS' region motif. Residue Lys523 coordinates ATP. Residues 809 to 883 (LADLLNVEEE…RIKEMEKLIK (75 aa)) adopt a coiled-coil conformation.

Belongs to the class-I aminoacyl-tRNA synthetase family. ValS type 1 subfamily. As to quaternary structure, monomer.

It is found in the cytoplasm. The catalysed reaction is tRNA(Val) + L-valine + ATP = L-valyl-tRNA(Val) + AMP + diphosphate. Functionally, catalyzes the attachment of valine to tRNA(Val). As ValRS can inadvertently accommodate and process structurally similar amino acids such as threonine, to avoid such errors, it has a 'posttransfer' editing activity that hydrolyzes mischarged Thr-tRNA(Val) in a tRNA-dependent manner. In Streptococcus mutans serotype c (strain ATCC 700610 / UA159), this protein is Valine--tRNA ligase.